An 807-amino-acid chain; its full sequence is Glycerol-3-phosphate acyltransferase (807 aa).

Positions C308–M313 match the HXXXXD motif motif.

It belongs to the GPAT/DAPAT family.

It is found in the cell inner membrane. It carries out the reaction sn-glycerol 3-phosphate + an acyl-CoA = a 1-acyl-sn-glycero-3-phosphate + CoA. The protein operates within phospholipid metabolism; CDP-diacylglycerol biosynthesis; CDP-diacylglycerol from sn-glycerol 3-phosphate: step 1/3. The protein is Glycerol-3-phosphate acyltransferase of Shewanella denitrificans (strain OS217 / ATCC BAA-1090 / DSM 15013).